The chain runs to 378 residues: Copper-containing nitrite reductase (378 aa).

The segment at residues 1–38 (MTEQLQMTRRTMLAGAALAGAVAPLLHTAQAHAAGAAA) is a signal peptide (tat-type signal). 2 Plastocyanin-like domains span residues 39 to 213 (AAGA…YDKI) and 214 to 378 (YYVG…PASM). Residues histidine 133, histidine 138, histidine 173, cysteine 174, histidine 183, methionine 188, and histidine 344 each contribute to the Cu cation site.

This sequence belongs to the multicopper oxidase family. In terms of assembly, homotrimer. Cu(+) serves as cofactor. Cu(2+) is required as a cofactor. It depends on FAD as a cofactor. Post-translationally, predicted to be exported by the Tat system. The position of the signal peptide cleavage has been experimentally proven.

It localises to the periplasm. The enzyme catalyses nitric oxide + Fe(III)-[cytochrome c] + H2O = Fe(II)-[cytochrome c] + nitrite + 2 H(+). It participates in nitrogen metabolism; nitrate reduction (denitrification); dinitrogen from nitrate: step 2/4. The protein is Copper-containing nitrite reductase (nirK) of Achromobacter cycloclastes.